Reading from the N-terminus, the 638-residue chain is LEAF RUST 10 DISEASE-RESISTANCE LOCUS RECEPTOR-LIKE PROTEIN KINASE-like 2.1 (638 aa).

The N-terminal stretch at 1-29 (MINLSLYQTNSLSYTIIWMLFVIPSCVLS) is a signal peptide. Over 30–264 (VDERQKHCSP…EHTCGKMGIG (235 aa)) the chain is Extracellular. N-linked (GlcNAc...) asparagine glycans are attached at residues Asn-69, Asn-114, Asn-136, Asn-204, and Asn-239. A helical membrane pass occupies residues 265–285 (IGLGCGFLGATLITVCLLCFF). Topologically, residues 286–638 (FQKRRTSHHL…YTEVFIGSTS (353 aa)) are cytoplasmic. A Protein kinase domain is found at 321–609 (KLFSHTLGKG…VLEVPPKPSI (289 aa)). Residues 327–335 (LGKGGFGTV) and Lys-349 each bind ATP. Tyr-393 carries the post-translational modification Phosphotyrosine. Asp-444 functions as the Proton acceptor in the catalytic mechanism. At Thr-484 the chain carries Phosphothreonine.

This sequence belongs to the protein kinase superfamily. Ser/Thr protein kinase family.

The protein resides in the membrane. It catalyses the reaction L-seryl-[protein] + ATP = O-phospho-L-seryl-[protein] + ADP + H(+). The enzyme catalyses L-threonyl-[protein] + ATP = O-phospho-L-threonyl-[protein] + ADP + H(+). The chain is LEAF RUST 10 DISEASE-RESISTANCE LOCUS RECEPTOR-LIKE PROTEIN KINASE-like 2.1 from Arabidopsis thaliana (Mouse-ear cress).